Reading from the N-terminus, the 210-residue chain is Putative protein-lysine deacylase ABHD14B (210 aa).

S91 is subject to Phosphoserine. Catalysis depends on charge relay system residues S111, D162, and H188.

This sequence belongs to the AB hydrolase superfamily. ABHD14 family. As to quaternary structure, may interact with TAF1.

Its subcellular location is the cytoplasm. It is found in the nucleus. It catalyses the reaction L-lysyl-[protein] + acetyl-CoA = N(6)-acetyl-L-lysyl-[protein] + CoA + H(+). Its function is as follows. Acts as an atypical protein-lysine deacetylase in vitro. Catalyzes the deacetylation of lysine residues using CoA as substrate, generating acetyl-CoA and the free amine of protein-lysine residues. Additional experiments are however required to confirm the protein-lysine deacetylase activity in vivo. Has hydrolase activity towards various surrogate p-nitrophenyl (pNp) substrates, such as pNp-butyrate, pNp-acetate and pNp-octanoate in vitro, with a strong preference for pNp-acetate. May activate transcription. This Rattus norvegicus (Rat) protein is Putative protein-lysine deacylase ABHD14B.